A 340-amino-acid chain; its full sequence is Outer membrane protein B (340 aa).

The N-terminal stretch at 1 to 26 (MSSKLVNSLRLTFLSFLGIVSTSLDA) is a signal peptide.

Belongs to the chlamydial OMP family.

The protein localises to the cell outer membrane. This Chlamydia muridarum (strain MoPn / Nigg) protein is Outer membrane protein B (ompB).